The chain runs to 920 residues: Phosphoenolpyruvate carboxylase (920 aa).

Active-site residues include H138 and K583.

This sequence belongs to the PEPCase type 1 family. The cofactor is Mg(2+).

It catalyses the reaction oxaloacetate + phosphate = phosphoenolpyruvate + hydrogencarbonate. Its function is as follows. Forms oxaloacetate, a four-carbon dicarboxylic acid source for the tricarboxylic acid cycle. This is Phosphoenolpyruvate carboxylase from Streptococcus pyogenes serotype M3 (strain ATCC BAA-595 / MGAS315).